The primary structure comprises 549 residues: Membrane protein insertase YidC (549 aa).

A helical membrane pass occupies residues Val-8–Ser-28. Residues Pro-29–Pro-39 show a composition bias toward pro residues. The segment at Pro-29–Asp-68 is disordered. 2 stretches are compositionally biased toward low complexity: residues Glu-40 to Ala-49 and Gln-55 to Asp-68. Helical transmembrane passes span Ile-328–Met-348, Leu-354–Tyr-374, Leu-424–Leu-444, and Pro-502–Val-522.

It belongs to the OXA1/ALB3/YidC family. Type 1 subfamily. Interacts with the Sec translocase complex via SecD. Specifically interacts with transmembrane segments of nascent integral membrane proteins during membrane integration.

The protein localises to the cell inner membrane. In terms of biological role, required for the insertion and/or proper folding and/or complex formation of integral membrane proteins into the membrane. Involved in integration of membrane proteins that insert both dependently and independently of the Sec translocase complex, as well as at least some lipoproteins. Aids folding of multispanning membrane proteins. In Anaeromyxobacter sp. (strain Fw109-5), this protein is Membrane protein insertase YidC.